A 303-amino-acid polypeptide reads, in one-letter code: MTAILQMRNVRKLYGDHVVVDNLDLEVQPGQCFGLLGPNGAGKTTTLRMLLGLTTPASGTLMLCGEPIPQRAPQARMRVGVVPQFDNLDPDFSVIENLRIFGRYFGLSSAQIAERVPKLLEFARLESRADAQVRDLSGGMRRRLTVARALINDPDLLIMDEPTTGLDPQARHLIWERLKSLLSAGKTILLTTHFMEEAERLCNHLCVIDAGRKIAEGKPHELIDSEIGCDVVEVYGDELEPLRDTLTPLAERTEMRGETLFFYVREPAPLLAALHGKGGVRYLHRPANLEDVFLKLTGREMRD.

One can recognise an ABC transporter domain in the interval 5–235 (LQMRNVRKLY…EIGCDVVEVY (231 aa)). Residue 37–44 (GPNGAGKT) participates in ATP binding.

It belongs to the ABC transporter superfamily. Lipooligosaccharide exporter (TC 3.A.1.102) family. The complex is composed of two ATP-binding proteins (NodI) and two transmembrane proteins (NodJ).

Its subcellular location is the cell inner membrane. Its function is as follows. Part of the ABC transporter complex NodIJ involved in the export of the nodulation factors (Nod factors), the bacterial signal molecules that induce symbiosis and subsequent nodulation induction. Nod factors are LCO (lipo-chitin oligosaccharide), a modified beta-1,4-linked N-acetylglucosamine oligosaccharide. This subunit is responsible for energy coupling to the transport system. This is Nod factor export ATP-binding protein I from Cupriavidus metallidurans (strain ATCC 43123 / DSM 2839 / NBRC 102507 / CH34) (Ralstonia metallidurans).